We begin with the raw amino-acid sequence, 230 residues long: Ethylene-responsive transcription factor ERF012 (230 aa).

Residues 1 to 17 (MVKQERKIQTSSTKKEM) show a composition bias toward basic and acidic residues. The segment at 1 to 51 (MVKQERKIQTSSTKKEMPLSSSPSSSSSSSSSSSSSSCKNKNKKSKIKKYK) is disordered. The span at 20–39 (SSSPSSSSSSSSSSSSSSCK) shows a compositional bias: low complexity. The span at 40–51 (NKNKKSKIKKYK) shows a compositional bias: basic residues. Residues 49 to 106 (KYKGVRMRSWGSWVSEIRAPNQKTRIWLGSYSTAEAAARAYDVALLCLKGPQANLNFP) constitute a DNA-binding region (AP2/ERF).

It belongs to the AP2/ERF transcription factor family. ERF subfamily. In terms of tissue distribution, expressed cotyledons, ovules and seeds of immature siliques.

Its subcellular location is the nucleus. In terms of biological role, transcriptional activator involved in the regulation of plant development and tolerance to abiotic stresses. Involved in salt and osmotic stress response pathways. May be regulated by the stress-related genes RD29A, RD22, DREB1A or P5CS during stress response. Binds to the GCC-box pathogenesis-related promoter element. May be involved in the regulation of gene expression by stress factors and by components of stress signal transduction pathways. This chain is Ethylene-responsive transcription factor ERF012 (ERF012), found in Arabidopsis thaliana (Mouse-ear cress).